Consider the following 261-residue polypeptide: Cytochrome c oxidase subunit 3 (261 aa).

The Mitochondrial matrix segment spans residues 1–15; that stretch reads MTHQTHAYHMVNPSP. The helical transmembrane segment at 16–34 threads the bilayer; that stretch reads WPLTGALSALLMTSGLAMW. The Mitochondrial intermembrane portion of the chain corresponds to 35-40; sequence FHFNST. The helical transmembrane segment at 41-66 threads the bilayer; it reads LLLALGLLTNILTMYQWWRDIIREST. Over 67–72 the chain is Mitochondrial matrix; sequence FQGHHT. Residues 73–105 traverse the membrane as a helical segment; sequence SIVQKGLRYGMILFIISEVFFFSGFFWAFYHSS. Residues 106-128 lie on the Mitochondrial intermembrane side of the membrane; that stretch reads LAPTPELGGCWPPTGIHPLNPLE. The chain crosses the membrane as a helical span at residues 129-152; sequence VPLLNTSVLLASGVSITWAHHSLM. Residues 153–155 are Mitochondrial matrix-facing; that stretch reads EGN. A helical transmembrane segment spans residues 156–183; sequence RKNMLQGLFITISLGVYFTLLQASEYYE. The Mitochondrial intermembrane segment spans residues 184–190; it reads ASFTISD. Residues 191–223 traverse the membrane as a helical segment; the sequence is GVYGSTFFVATGFHGLHVIIGSTFLIVCFLRQL. Residues 224-232 are Mitochondrial matrix-facing; it reads KFHFTSSHH. A helical transmembrane segment spans residues 233 to 256; the sequence is FGFEAAAWYWHFVDVVWLFLYVSI. Over 257-261 the chain is Mitochondrial intermembrane; that stretch reads YWWGS.

Belongs to the cytochrome c oxidase subunit 3 family. In terms of assembly, component of the cytochrome c oxidase (complex IV, CIV), a multisubunit enzyme composed of 14 subunits. The complex is composed of a catalytic core of 3 subunits MT-CO1, MT-CO2 and MT-CO3, encoded in the mitochondrial DNA, and 11 supernumerary subunits COX4I, COX5A, COX5B, COX6A, COX6B, COX6C, COX7A, COX7B, COX7C, COX8 and NDUFA4, which are encoded in the nuclear genome. The complex exists as a monomer or a dimer and forms supercomplexes (SCs) in the inner mitochondrial membrane with NADH-ubiquinone oxidoreductase (complex I, CI) and ubiquinol-cytochrome c oxidoreductase (cytochrome b-c1 complex, complex III, CIII), resulting in different assemblies (supercomplex SCI(1)III(2)IV(1) and megacomplex MCI(2)III(2)IV(2)).

The protein localises to the mitochondrion inner membrane. It catalyses the reaction 4 Fe(II)-[cytochrome c] + O2 + 8 H(+)(in) = 4 Fe(III)-[cytochrome c] + 2 H2O + 4 H(+)(out). Its function is as follows. Component of the cytochrome c oxidase, the last enzyme in the mitochondrial electron transport chain which drives oxidative phosphorylation. The respiratory chain contains 3 multisubunit complexes succinate dehydrogenase (complex II, CII), ubiquinol-cytochrome c oxidoreductase (cytochrome b-c1 complex, complex III, CIII) and cytochrome c oxidase (complex IV, CIV), that cooperate to transfer electrons derived from NADH and succinate to molecular oxygen, creating an electrochemical gradient over the inner membrane that drives transmembrane transport and the ATP synthase. Cytochrome c oxidase is the component of the respiratory chain that catalyzes the reduction of oxygen to water. Electrons originating from reduced cytochrome c in the intermembrane space (IMS) are transferred via the dinuclear copper A center (CU(A)) of subunit 2 and heme A of subunit 1 to the active site in subunit 1, a binuclear center (BNC) formed by heme A3 and copper B (CU(B)). The BNC reduces molecular oxygen to 2 water molecules using 4 electrons from cytochrome c in the IMS and 4 protons from the mitochondrial matrix. This chain is Cytochrome c oxidase subunit 3 (MT-CO3), found in Equus asinus (Donkey).